A 1188-amino-acid polypeptide reads, in one-letter code: DNA-directed RNA polymerase subunit beta (1188 aa).

The protein belongs to the RNA polymerase beta chain family. The RNAP catalytic core consists of 2 alpha, 1 beta, 1 beta' and 1 omega subunit. When a sigma factor is associated with the core the holoenzyme is formed, which can initiate transcription.

The enzyme catalyses RNA(n) + a ribonucleoside 5'-triphosphate = RNA(n+1) + diphosphate. DNA-dependent RNA polymerase catalyzes the transcription of DNA into RNA using the four ribonucleoside triphosphates as substrates. The sequence is that of DNA-directed RNA polymerase subunit beta from Streptococcus equi subsp. equi (strain 4047).